We begin with the raw amino-acid sequence, 222 residues long: Probable nicotinate-nucleotide adenylyltransferase (222 aa).

It belongs to the NadD family.

It catalyses the reaction nicotinate beta-D-ribonucleotide + ATP + H(+) = deamido-NAD(+) + diphosphate. The protein operates within cofactor biosynthesis; NAD(+) biosynthesis; deamido-NAD(+) from nicotinate D-ribonucleotide: step 1/1. Functionally, catalyzes the reversible adenylation of nicotinate mononucleotide (NaMN) to nicotinic acid adenine dinucleotide (NaAD). The chain is Probable nicotinate-nucleotide adenylyltransferase from Pseudomonas syringae pv. tomato (strain ATCC BAA-871 / DC3000).